The sequence spans 216 residues: Adenylate kinase (216 aa).

Residue G10–T15 participates in ATP binding. The NMP stretch occupies residues S30–V59. AMP is bound by residues T31, R36, A57–V59, G85–R88, and Q92. The LID stretch occupies residues G126–D163. R127 lines the ATP pocket. Positions 130 and 133 each coordinate Zn(2+). T136 to Y137 is a binding site for ATP. Residues C150 and C153 each coordinate Zn(2+). Residues R160 and R171 each contribute to the AMP site. Q199 is a binding site for ATP.

This sequence belongs to the adenylate kinase family. As to quaternary structure, monomer.

Its subcellular location is the cytoplasm. It catalyses the reaction AMP + ATP = 2 ADP. It functions in the pathway purine metabolism; AMP biosynthesis via salvage pathway; AMP from ADP: step 1/1. Functionally, catalyzes the reversible transfer of the terminal phosphate group between ATP and AMP. Plays an important role in cellular energy homeostasis and in adenine nucleotide metabolism. The chain is Adenylate kinase from Bacillus cereus (strain G9842).